A 335-amino-acid polypeptide reads, in one-letter code: Nicotinate-nucleotide--dimethylbenzimidazole phosphoribosyltransferase (335 aa).

Glutamate 304 (proton acceptor) is an active-site residue.

This sequence belongs to the CobT family.

The enzyme catalyses 5,6-dimethylbenzimidazole + nicotinate beta-D-ribonucleotide = alpha-ribazole 5'-phosphate + nicotinate + H(+). The protein operates within nucleoside biosynthesis; alpha-ribazole biosynthesis; alpha-ribazole from 5,6-dimethylbenzimidazole: step 1/2. In terms of biological role, catalyzes the synthesis of alpha-ribazole-5'-phosphate from nicotinate mononucleotide (NAMN) and 5,6-dimethylbenzimidazole (DMB). In Thermus thermophilus (strain ATCC 27634 / DSM 579 / HB8), this protein is Nicotinate-nucleotide--dimethylbenzimidazole phosphoribosyltransferase.